We begin with the raw amino-acid sequence, 1666 residues long: Cortactin-binding protein 2 (1666 aa).

5 disordered regions span residues 1 to 25 (MATDGASCEPDFARAPEDAAGAPAE), 202 to 224 (EKKRASGLEEELSGEKRRSAEME), 366 to 411 (IVSS…PAIQ), 457 to 481 (NANNDQDQNGNNTQSPPSRDVSPTS), and 501 to 619 (RFTS…PKPS). A coiled-coil region spans residues 120 to 274 (KMQERMSTQL…MTEQLKRGND (155 aa)). 2 stretches are compositionally biased toward low complexity: residues 385–398 (GPSTSSGPDTPSST) and 457–468 (NANNDQDQNGNN). Residues 469-481 (TQSPPSRDVSPTS) show a composition bias toward polar residues. Arg501 carries the asymmetric dimethylarginine modification. ANK repeat units lie at residues 712–742 (GRPTLLQQAAAQGNVTLLSMLLNEEGLDINH), 746–775 (DGHSALYSAAKNGHTDCVRLLLNAEAQVNA), 779–808 (DGFTPVCAAAAQGHVKCVELLVAYHANINH), 812–841 (EGQTPLYLACKNGNKECIKLLLEAGTDRSV), 845–874 (DGWTPVHAAVDTGSVDGLKLLLYHRAPACG), and 915–945 (EGWTAAHIAASKGFKNCLKILCRHGGLEPER). Phosphoserine is present on Ser1527. Basic and acidic residues predominate over residues 1545–1566 (SESDISKIADTRDDLRRFDSSR). Disordered stretches follow at residues 1545-1601 (SESD…RSNR) and 1620-1666 (RSKI…KPNQ). The segment covering 1585–1594 (KEVSPLSSHQ) has biased composition (polar residues). Residues 1627 to 1641 (SQNTKRSSSSSNTRQ) are compositionally biased toward low complexity. Basic and acidic residues predominate over residues 1648-1666 (SKDEIWNLRNNEQIEKPNQ).

Interacts with CTTN/cortactin SH3 domain. Interacts with STRN, STRN4/zinedin and MOB4/phocein; this interactions mediate the association with the STRIPAK core complex and may regulate dendritic spine distribution of the STRIPAK complex in hippocampal neurons. Activation of glutamate receptors weakens the interaction with STRN and STRN4.

Its subcellular location is the cytoplasm. It is found in the cell cortex. It localises to the cell projection. The protein localises to the dendritic spine. Functionally, regulates the dendritic spine distribution of CTTN/cortactin in hippocampal neurons, and thus controls dendritic spinogenesis and dendritic spine maintenance. Associates with the striatin-interacting phosphatase and kinase (STRIPAK) core complex to regulate dendritic spine distribution of the STRIPAK complex in hippocampal neurons. The protein is Cortactin-binding protein 2 (CTTNBP2) of Echinops telfairi (Lesser hedgehog tenrec).